Consider the following 366-residue polypeptide: tRNA-specific 2-thiouridylase MnmA (366 aa).

ATP is bound by residues 6 to 13 (AMSGGVDS) and leucine 32. The active-site Nucleophile is cysteine 101. Cysteine 101 and cysteine 199 form a disulfide bridge. Residue glycine 125 coordinates ATP. The interval 149–151 (KDQ) is interaction with tRNA. Cysteine 199 acts as the Cysteine persulfide intermediate in catalysis.

The protein belongs to the MnmA/TRMU family.

The protein resides in the cytoplasm. The catalysed reaction is S-sulfanyl-L-cysteinyl-[protein] + uridine(34) in tRNA + AH2 + ATP = 2-thiouridine(34) in tRNA + L-cysteinyl-[protein] + A + AMP + diphosphate + H(+). Functionally, catalyzes the 2-thiolation of uridine at the wobble position (U34) of tRNA, leading to the formation of s(2)U34. The chain is tRNA-specific 2-thiouridylase MnmA from Corynebacterium diphtheriae (strain ATCC 700971 / NCTC 13129 / Biotype gravis).